A 483-amino-acid chain; its full sequence is MSRFIDRVVLHVSAGKGGNGCASVHREKFKPLGGPDGANGGRGGDVILVVDENIHTLLDFHFHPNAKATNGKQGAGSNREGANGEDLILKVPDGTVVLDTDGNVLADLVGVGSRYDAAQGGRGGLGNAALASKARKAPGFALLGEDGVERDLVLELKSVADVGLLGFPSAGKSSLVSVLSAAKPKIADYPFTTLVPNLGVVSSGDTTFTVADVPGLIPGASEGRGLGLDFLRHIERCAVLAHVIDCATLDPGRDPISDIDALEAELAAYTPALSGDSGLGDLDKRPRVVILNKTDVPEAAELAEMVTPEIEARGWPVFTISAVSREGLRPLTFALAKMVRDYREAHPKPEPKRQVIRPVKVKDSSFTIEKDPDIPGGFVVRGTRPERWIRQTAFDNDEAVGYLADRLARLGVEDALVKKGAQPGASVTIGDVSFEWEPMTPAGIDLTRTGRGTDPRLDQVERIGADERKHARRVRRGLLDEDA.

The 158-residue stretch at 2-159 (SRFIDRVVLH…RDLVLELKSV (158 aa)) folds into the Obg domain. An OBG-type G domain is found at 160 to 340 (ADVGLLGFPS…LTFALAKMVR (181 aa)). GTP is bound by residues 166–173 (GFPSAGKS), 191–195 (FTTLV), 212–215 (DVPG), 292–295 (NKTD), and 321–323 (SAV). Residues Ser-173 and Thr-193 each coordinate Mg(2+). The OCT domain maps to 358-438 (PVKVKDSSFT…IGDVSFEWEP (81 aa)).

The protein belongs to the TRAFAC class OBG-HflX-like GTPase superfamily. OBG GTPase family. As to quaternary structure, monomer. The cofactor is Mg(2+).

It localises to the cytoplasm. In terms of biological role, an essential GTPase which binds GTP, GDP and possibly (p)ppGpp with moderate affinity, with high nucleotide exchange rates and a fairly low GTP hydrolysis rate. Plays a role in control of the cell cycle, stress response, ribosome biogenesis and in those bacteria that undergo differentiation, in morphogenesis control. The sequence is that of GTPase Obg from Rhodococcus erythropolis (strain PR4 / NBRC 100887).